We begin with the raw amino-acid sequence, 130 residues long: Fumarate reductase subunit C (130 aa).

The next 3 helical transmembrane spans lie at 37–57, 60–80, and 109–129; these read VWFSILLIYGVFALKSGPAGW, FVGFLQNPLVLLINIITLLAA, and VIKALWVVTIVATAIILAVAL.

The protein belongs to the FrdC family. As to quaternary structure, part of an enzyme complex containing four subunits: a flavoprotein (FrdA), an iron-sulfur protein (FrdB), and two hydrophobic anchor proteins (FrdC and FrdD).

It is found in the cell inner membrane. Two distinct, membrane-bound, FAD-containing enzymes are responsible for the catalysis of fumarate and succinate interconversion; fumarate reductase is used in anaerobic growth, and succinate dehydrogenase is used in aerobic growth. Anchors the catalytic components of the fumarate reductase complex to the cell inner membrane, binds quinones. The sequence is that of Fumarate reductase subunit C from Yersinia enterocolitica serotype O:8 / biotype 1B (strain NCTC 13174 / 8081).